The following is a 459-amino-acid chain: Ribulose bisphosphate carboxylase large chain (459 aa).

Residues 1–2 (MS) constitute a propeptide that is removed on maturation. Pro-3 bears the N-acetylproline mark. Lys-14 bears the N6,N6,N6-trimethyllysine mark. 2 residues coordinate substrate: Xaa-123 and Thr-173. Lys-175 (proton acceptor) is an active-site residue. Substrate is bound at residue Lys-177. 3 residues coordinate Mg(2+): Lys-201, Asp-203, and Glu-204. Lys-201 is modified (N6-carboxylysine). The Proton acceptor role is filled by His-294. Substrate-binding residues include Arg-295, His-327, and Ser-379.

The protein belongs to the RuBisCO large chain family. Type I subfamily. Heterohexadecamer of 8 large chains and 8 small chains; disulfide-linked. The disulfide link is formed within the large subunit homodimers. The cofactor is Mg(2+). Post-translationally, the disulfide bond which can form in the large chain dimeric partners within the hexadecamer appears to be associated with oxidative stress and protein turnover.

The protein localises to the plastid. The protein resides in the chloroplast. The catalysed reaction is 2 (2R)-3-phosphoglycerate + 2 H(+) = D-ribulose 1,5-bisphosphate + CO2 + H2O. The enzyme catalyses D-ribulose 1,5-bisphosphate + O2 = 2-phosphoglycolate + (2R)-3-phosphoglycerate + 2 H(+). RuBisCO catalyzes two reactions: the carboxylation of D-ribulose 1,5-bisphosphate, the primary event in carbon dioxide fixation, as well as the oxidative fragmentation of the pentose substrate in the photorespiration process. Both reactions occur simultaneously and in competition at the same active site. The chain is Ribulose bisphosphate carboxylase large chain from Corynocarpus laevigatus (New Zealand laurel).